The chain runs to 477 residues: MKQAIRHIHFVGIGGSGMCGIAEVLHNLGYVVSGSDLADSPTLRRLQSLGVATHVGHAAAHIAGADAVVTSTAVQADNPEVLAARERKIPVVPRALMLTELMRLRKGIAIAGAHGKTTTTSLVASVLGEAGLDPTFVIGGRLNSAGTNAKLGQGEYIVVEADESDGSFLNLLPVMAVVTNIDADHMETYGHDFGRLKQAFVDFLHRMPFYGTAILCIDNPAVRDILPLVTCPVTSYGLSEDAEVRAVDVRAVGTQMHFTVQRRNGVTLPDLQVVLNLAGEHNVLNALAVIAVAAELNVPDDALLRALAGFTGVGRRFQRHGDLPAQGGGHFTLIEDYGHHPVEMAATLAAARGAYPGRRLVLAFQPHRYSRTRDCFEDFVKVLGTADAVLLTEVYAAGEAPIVAADGRSLARALRVAGTVEPVFIDNVADMPQRIAAGARDGDVVLCMGAGSIGGVPAKVVDLLQKNELLAQEGRAQ.

112–118 provides a ligand contact to ATP; the sequence is GAHGKTT.

Belongs to the MurCDEF family.

Its subcellular location is the cytoplasm. The catalysed reaction is UDP-N-acetyl-alpha-D-muramate + L-alanine + ATP = UDP-N-acetyl-alpha-D-muramoyl-L-alanine + ADP + phosphate + H(+). Its pathway is cell wall biogenesis; peptidoglycan biosynthesis. Cell wall formation. In Acidovorax ebreus (strain TPSY) (Diaphorobacter sp. (strain TPSY)), this protein is UDP-N-acetylmuramate--L-alanine ligase.